Reading from the N-terminus, the 167-residue chain is MADYYNVGKVTSAHGIKGEVKVYPLTNVPERFYDLEYVWIFDDQQRPHKYDIEYVKIISKGVCVKLKGIDTRGDAEKLKGAFLKVDSQNALELEENEYFIKDLVGMKVYTEEGSFLGTLVEVLKTGANDVYVIKTEEREILIPAIKEVVKKVDVDNKVMVVHLLEGL.

Positions 94–167 (EENEYFIKDL…VMVVHLLEGL (74 aa)) constitute a PRC barrel domain.

Belongs to the RimM family. In terms of assembly, binds ribosomal protein uS19.

The protein resides in the cytoplasm. In terms of biological role, an accessory protein needed during the final step in the assembly of 30S ribosomal subunit, possibly for assembly of the head region. Essential for efficient processing of 16S rRNA. May be needed both before and after RbfA during the maturation of 16S rRNA. It has affinity for free ribosomal 30S subunits but not for 70S ribosomes. The polypeptide is Ribosome maturation factor RimM (Thermoanaerobacter pseudethanolicus (strain ATCC 33223 / 39E) (Clostridium thermohydrosulfuricum)).